The following is a 153-amino-acid chain: Endoribonuclease YbeY (153 aa).

The Zn(2+) site is built by His-118, His-122, and His-128.

Belongs to the endoribonuclease YbeY family. It depends on Zn(2+) as a cofactor.

It localises to the cytoplasm. Functionally, single strand-specific metallo-endoribonuclease involved in late-stage 70S ribosome quality control and in maturation of the 3' terminus of the 16S rRNA. In Pelagibacter ubique (strain HTCC1062), this protein is Endoribonuclease YbeY.